Consider the following 82-residue polypeptide: Sulfur carrier protein TusA (82 aa).

Catalysis depends on cysteine 19, which acts as the Cysteine persulfide intermediate.

It belongs to the sulfur carrier protein TusA family.

The protein resides in the cytoplasm. Functionally, sulfur carrier protein which probably makes part of a sulfur-relay system. The chain is Sulfur carrier protein TusA from Vibrio parahaemolyticus serotype O3:K6 (strain RIMD 2210633).